Reading from the N-terminus, the 75-residue chain is ATP synthase subunit c (75 aa).

Helical transmembrane passes span 8–28 (FLGI…VSNI) and 54–74 (AALT…LIFV).

This sequence belongs to the ATPase C chain family. As to quaternary structure, F-type ATPases have 2 components, F(1) - the catalytic core - and F(0) - the membrane proton channel. F(1) has five subunits: alpha(3), beta(3), gamma(1), delta(1), epsilon(1). F(0) has three main subunits: a(1), b(2) and c(10-14). The alpha and beta chains form an alternating ring which encloses part of the gamma chain. F(1) is attached to F(0) by a central stalk formed by the gamma and epsilon chains, while a peripheral stalk is formed by the delta and b chains.

It is found in the cell inner membrane. In terms of biological role, f(1)F(0) ATP synthase produces ATP from ADP in the presence of a proton or sodium gradient. F-type ATPases consist of two structural domains, F(1) containing the extramembraneous catalytic core and F(0) containing the membrane proton channel, linked together by a central stalk and a peripheral stalk. During catalysis, ATP synthesis in the catalytic domain of F(1) is coupled via a rotary mechanism of the central stalk subunits to proton translocation. Key component of the F(0) channel; it plays a direct role in translocation across the membrane. A homomeric c-ring of between 10-14 subunits forms the central stalk rotor element with the F(1) delta and epsilon subunits. This is ATP synthase subunit c from Neorickettsia sennetsu (strain ATCC VR-367 / Miyayama) (Ehrlichia sennetsu).